The following is a 421-amino-acid chain: Imidazolonepropionase (421 aa).

Fe(3+) is bound by residues His-81 and His-83. The Zn(2+) site is built by His-81 and His-83. 4-imidazolone-5-propanoate is bound by residues Arg-90, Tyr-153, and His-186. Residue Tyr-153 participates in N-formimidoyl-L-glutamate binding. Position 251 (His-251) interacts with Fe(3+). A Zn(2+)-binding site is contributed by His-251. Glu-254 contacts 4-imidazolone-5-propanoate. Asp-326 serves as a coordination point for Fe(3+). A Zn(2+)-binding site is contributed by Asp-326. Residues Asn-328 and Gly-330 each contribute to the N-formimidoyl-L-glutamate site. Residue Ser-331 participates in 4-imidazolone-5-propanoate binding.

It belongs to the metallo-dependent hydrolases superfamily. HutI family. Zn(2+) is required as a cofactor. It depends on Fe(3+) as a cofactor.

The protein localises to the cytoplasm. It catalyses the reaction 4-imidazolone-5-propanoate + H2O = N-formimidoyl-L-glutamate. The protein operates within amino-acid degradation; L-histidine degradation into L-glutamate; N-formimidoyl-L-glutamate from L-histidine: step 3/3. In terms of biological role, catalyzes the hydrolytic cleavage of the carbon-nitrogen bond in imidazolone-5-propanoate to yield N-formimidoyl-L-glutamate. It is the third step in the universal histidine degradation pathway. This chain is Imidazolonepropionase, found in Streptococcus pyogenes serotype M28 (strain MGAS6180).